The primary structure comprises 161 residues: Cyclic pyranopterin monophosphate synthase (161 aa).

Substrate is bound by residues 78–80 and 116–117; these read LCH and ME. The active site involves Asp-131.

It belongs to the MoaC family. As to quaternary structure, homohexamer; trimer of dimers.

It carries out the reaction (8S)-3',8-cyclo-7,8-dihydroguanosine 5'-triphosphate = cyclic pyranopterin phosphate + diphosphate. It participates in cofactor biosynthesis; molybdopterin biosynthesis. Functionally, catalyzes the conversion of (8S)-3',8-cyclo-7,8-dihydroguanosine 5'-triphosphate to cyclic pyranopterin monophosphate (cPMP). This chain is Cyclic pyranopterin monophosphate synthase, found in Bordetella pertussis (strain Tohama I / ATCC BAA-589 / NCTC 13251).